A 424-amino-acid polypeptide reads, in one-letter code: Subtilisin-like protease 2 (424 aa).

Residues 1-17 form the signal peptide; the sequence is MQLLNLGLLLLLPFVAG. Residues 18-123 constitute a propeptide that is removed on maturation; sequence EIAPQPEPLR…VHPDQHVYLA (106 aa). Residues 37 to 123 form the Inhibitor I9 domain; sequence QYIVTLKEGL…VHPDQHVYLA (87 aa). The Peptidase S8 domain maps to 132 to 424; that stretch reads RWGLGYMSSK…RKFTLPKNTK (293 aa). Residues D170 and H202 each act as charge relay system in the active site. N-linked (GlcNAc...) asparagine glycosylation is found at N249, N262, and N350. Catalysis depends on S359, which acts as the Charge relay system. A glycan (N-linked (GlcNAc...) asparagine) is linked at N390.

The protein belongs to the peptidase S8 family.

It is found in the secreted. Its function is as follows. Secreted subtilisin-like serine protease with keratinolytic activity that contributes to pathogenicity. This chain is Subtilisin-like protease 2 (SUB2), found in Arthroderma otae (Microsporum canis).